The chain runs to 233 residues: Methylthioribulose-1-phosphate dehydratase (233 aa).

A substrate-binding site is contributed by C91. 2 residues coordinate Zn(2+): H108 and H110. The active-site Proton donor/acceptor is the E137. H194 is a binding site for Zn(2+).

This sequence belongs to the aldolase class II family. MtnB subfamily. It depends on Zn(2+) as a cofactor.

It localises to the cytoplasm. The catalysed reaction is 5-(methylsulfanyl)-D-ribulose 1-phosphate = 5-methylsulfanyl-2,3-dioxopentyl phosphate + H2O. It participates in amino-acid biosynthesis; L-methionine biosynthesis via salvage pathway; L-methionine from S-methyl-5-thio-alpha-D-ribose 1-phosphate: step 2/6. Functionally, catalyzes the dehydration of methylthioribulose-1-phosphate (MTRu-1-P) into 2,3-diketo-5-methylthiopentyl-1-phosphate (DK-MTP-1-P). The protein is Methylthioribulose-1-phosphate dehydratase of Phaeosphaeria nodorum (strain SN15 / ATCC MYA-4574 / FGSC 10173) (Glume blotch fungus).